The following is a 21-amino-acid chain: Trypsin (21 aa).

A propeptide spans 1–7 (FPIEEDK) (activation peptide). Positions 8–21 (IVGGYECPKHXVPW) constitute a Peptidase S1 domain.

It belongs to the peptidase S1 family.

It is found in the secreted. The protein resides in the extracellular space. It catalyses the reaction Preferential cleavage: Arg-|-Xaa, Lys-|-Xaa.. The chain is Trypsin from Protopterus aethiopicus (Marbled lungfish).